Consider the following 408-residue polypeptide: Imidazolonepropionase (408 aa).

The Fe(3+) site is built by His-73 and His-75. The Zn(2+) site is built by His-73 and His-75. 4-imidazolone-5-propanoate-binding residues include Arg-82, Tyr-145, and His-178. Position 145 (Tyr-145) interacts with N-formimidoyl-L-glutamate. Residue His-243 participates in Fe(3+) binding. His-243 serves as a coordination point for Zn(2+). Gln-246 provides a ligand contact to 4-imidazolone-5-propanoate. A Fe(3+)-binding site is contributed by Asp-318. Asp-318 is a binding site for Zn(2+). Positions 320 and 322 each coordinate N-formimidoyl-L-glutamate. A 4-imidazolone-5-propanoate-binding site is contributed by Ser-323.

This sequence belongs to the metallo-dependent hydrolases superfamily. HutI family. The cofactor is Zn(2+). Fe(3+) serves as cofactor.

It localises to the cytoplasm. The enzyme catalyses 4-imidazolone-5-propanoate + H2O = N-formimidoyl-L-glutamate. Its pathway is amino-acid degradation; L-histidine degradation into L-glutamate; N-formimidoyl-L-glutamate from L-histidine: step 3/3. Catalyzes the hydrolytic cleavage of the carbon-nitrogen bond in imidazolone-5-propanoate to yield N-formimidoyl-L-glutamate. It is the third step in the universal histidine degradation pathway. This chain is Imidazolonepropionase, found in Shewanella baltica (strain OS155 / ATCC BAA-1091).